The chain runs to 110 residues: GGSGGSGSSGNFTTASNIHMSSVTNTSIAGTGGTGGTGTGTGTGTGTGTGTGTGTDTGTGTGTRNGTNSGTNSGTRTGTASSYRGGGGGAGGGGGVTIQHLTLTESLLNK.

The segment at 23-97 is disordered; it reads VTNTSIAGTG…GGAGGGGGVT (75 aa). A run of 12 repeats spans residues 30-31, 33-34, 36-37, 38-39, 40-41, 42-43, 44-45, 46-47, 48-49, 50-51, 52-53, and 54-55. Residues 30-63 are compositionally biased toward gly residues; sequence GTGGTGGTGTGTGTGTGTGTGTGTGTDTGTGTGT. A 24 X 2 AA approximate tandem repeats of G-T region spans residues 30–79; sequence GTGGTGGTGTGTGTGTGTGTGTGTGTDTGTGTGTRNGTNSGTNSGTRTGT. The stretch at 56–57 is one 13; approximate repeat; that stretch reads DT. 3 consecutive repeat copies span residues 58 to 59, 60 to 61, and 62 to 63. One copy of the 17; approximate repeat lies at 64-65; that stretch reads RN. A compositionally biased stretch (low complexity) spans 64–83; that stretch reads RNGTNSGTNSGTRTGTASSY. Copy 18 of the repeat occupies 66–67; sequence GT. Residues 68-69 form a 19; approximate repeat; that stretch reads NS. Copy 20 of the repeat occupies 70–71; it reads GT. The 21; approximate repeat unit spans residues 72–73; the sequence is NS. The stretch at 74 to 75 is repeat 22; that stretch reads GT. The stretch at 76-77 is one 23; approximate repeat; sequence RT. Copy 24 of the repeat occupies 78–79; the sequence is GT. Residues 84–96 are compositionally biased toward gly residues; the sequence is RGGGGGAGGGGGV.

As to quaternary structure, forms a heterodimer with timeless (TIM); the complex then translocates into the nucleus. In terms of processing, phosphorylated with a circadian rhythmicity, probably by the double-time protein (dbt). Phosphorylation could be implicated in the stability of per monomer and in the formation of heterodimer per-tim.

It is found in the nucleus. The protein localises to the cytoplasm. Its subcellular location is the perinuclear region. In terms of biological role, essential for biological clock functions. Determines the period length of circadian and ultradian rhythms; an increase in PER dosage leads to shortened circadian rhythms and a decrease leads to lengthened circadian rhythms. Essential for the circadian rhythmicity of locomotor activity, eclosion behavior, and for the rhythmic component of the male courtship song that originates in the thoracic nervous system. The biological cycle depends on the rhythmic formation and nuclear localization of the TIM-PER complex. Light induces the degradation of TIM, which promotes elimination of PER. Nuclear activity of the heterodimer coordinatively regulates PER and TIM transcription through a negative feedback loop. Behaves as a negative element in circadian transcriptional loop. Does not appear to bind DNA, suggesting indirect transcriptional inhibition. This chain is Period circadian protein (per), found in Drosophila erecta (Fruit fly).